We begin with the raw amino-acid sequence, 262 residues long: tRNA pseudouridine synthase A (262 aa).

The active-site Nucleophile is the Asp-51. Tyr-109 contacts substrate.

Belongs to the tRNA pseudouridine synthase TruA family. As to quaternary structure, homodimer.

The catalysed reaction is uridine(38/39/40) in tRNA = pseudouridine(38/39/40) in tRNA. Formation of pseudouridine at positions 38, 39 and 40 in the anticodon stem and loop of transfer RNAs. The polypeptide is tRNA pseudouridine synthase A (Actinobacillus pleuropneumoniae serotype 7 (strain AP76)).